A 452-amino-acid chain; its full sequence is Nuclear distribution protein PAC1 (452 aa).

The region spanning 12–44 is the LisH domain; that stretch reads QKDELHKAILAYFSASGLSNTGAALREELGVGD. Residues 64 to 91 adopt a coiled-coil conformation; the sequence is TGVLRLQKKIMELESRLSSLQSELDSAT. 8 WD repeats span residues 117–158, 160–200, 204–245, 248–287, 290–350, 352–391, 396–435, and 437–452; these read SHRN…RTVK, HTKA…KNIR, GHDH…CVKT, GHSD…HKAT, GHEH…LKTL, GHDN…RCVK, AHSH…INVR, and VIAT…VFAS.

This sequence belongs to the WD repeat LIS1/nudF family. As to quaternary structure, self-associates. Interacts with NDL1 and dynein.

The protein localises to the cytoplasm. Its subcellular location is the cytoskeleton. It is found in the spindle pole. Functionally, positively regulates the activity of the minus-end directed microtubule motor protein dynein. May enhance dynein-mediated microtubule sliding by targeting dynein to the microtubule plus end. Required for nuclear migration during vegetative growth as well as development. Required for retrograde early endosome (EE) transport from the hyphal tip. Required for localization of dynein to the mitotic spindle poles. Recruits additional proteins to the dynein complex at SPBs. In Tuber melanosporum (strain Mel28) (Perigord black truffle), this protein is Nuclear distribution protein PAC1.